Here is a 566-residue protein sequence, read N- to C-terminus: uncharacterized protein (566 aa).

It belongs to the protein kinase superfamily. ADCK protein kinase family.

This is an uncharacterized protein from Synechocystis sp. (strain ATCC 27184 / PCC 6803 / Kazusa).